The sequence spans 544 residues: Protein adenylyltransferase (544 aa).

The Fido domain maps to 63-216 (FDTAYLCHIH…LEPMQHLFED (154 aa)). ATP is bound by residues 93 to 94 (FA), 106 to 107 (RT), 163 to 167 (EGNGR), and R170.

The protein localises to the secreted. It catalyses the reaction L-tyrosyl-[protein] + ATP = O-(5'-adenylyl)-L-tyrosyl-[protein] + diphosphate. The catalysed reaction is L-threonyl-[protein] + ATP = 3-O-(5'-adenylyl)-L-threonyl-[protein] + diphosphate. Its function is as follows. Adenylyltransferase involved in virulence by mediating the addition of adenosine 5'-monophosphate (AMP) to specific residue of host target proteins. The chain is Protein adenylyltransferase (bepA) from Bartonella henselae (strain ATCC 49882 / DSM 28221 / CCUG 30454 / Houston 1) (Rochalimaea henselae).